The sequence spans 235 residues: 1-(5-phosphoribosyl)-5-[(5-phosphoribosylamino)methylideneamino] imidazole-4-carboxamide isomerase (235 aa).

Residue aspartate 8 is the Proton acceptor of the active site. Residue aspartate 128 is the Proton donor of the active site.

The protein belongs to the HisA/HisF family.

The protein resides in the cytoplasm. The catalysed reaction is 1-(5-phospho-beta-D-ribosyl)-5-[(5-phospho-beta-D-ribosylamino)methylideneamino]imidazole-4-carboxamide = 5-[(5-phospho-1-deoxy-D-ribulos-1-ylimino)methylamino]-1-(5-phospho-beta-D-ribosyl)imidazole-4-carboxamide. It participates in amino-acid biosynthesis; L-histidine biosynthesis; L-histidine from 5-phospho-alpha-D-ribose 1-diphosphate: step 4/9. The polypeptide is 1-(5-phosphoribosyl)-5-[(5-phosphoribosylamino)methylideneamino] imidazole-4-carboxamide isomerase (Thermus thermophilus (strain ATCC BAA-163 / DSM 7039 / HB27)).